The following is a 294-amino-acid chain: 2-hydroxy-3-oxopropionate reductase (294 aa).

NAD(+)-binding positions include 4–18 and Ser95; that span reads GFIG…MSKN. Residue Lys170 is part of the active site. Lys238 contributes to the NAD(+) binding site.

The protein belongs to the HIBADH-related family. 2-hydroxy-3-oxopropionate reductase subfamily.

It carries out the reaction (R)-glycerate + NADP(+) = 2-hydroxy-3-oxopropanoate + NADPH + H(+). The catalysed reaction is (R)-glycerate + NAD(+) = 2-hydroxy-3-oxopropanoate + NADH + H(+). Its pathway is carbohydrate acid metabolism; galactarate degradation; D-glycerate from galactarate: step 3/3. In terms of biological role, catalyzes the reduction of tatronate semialdehyde to D-glycerate. In Escherichia coli O6:H1 (strain CFT073 / ATCC 700928 / UPEC), this protein is 2-hydroxy-3-oxopropionate reductase.